The sequence spans 553 residues: Chaperonin GroEL (553 aa).

ATP is bound by residues 30-33 (TLGP), K51, 87-91 (DGTTT), G415, and D495.

It belongs to the chaperonin (HSP60) family. Forms a cylinder of 14 subunits composed of two heptameric rings stacked back-to-back. Interacts with the co-chaperonin GroES.

The protein resides in the cytoplasm. It carries out the reaction ATP + H2O + a folded polypeptide = ADP + phosphate + an unfolded polypeptide.. Together with its co-chaperonin GroES, plays an essential role in assisting protein folding. The GroEL-GroES system forms a nano-cage that allows encapsulation of the non-native substrate proteins and provides a physical environment optimized to promote and accelerate protein folding. This is Chaperonin GroEL from Buchnera aphidicola subsp. Tuberolachnus salignus.